Consider the following 439-residue polypeptide: Acetyl esterase Axe7A (439 aa).

Positions 1–31 (MFNFAPKQTTEMKKLLFTLVFVLGSMATALA) are cleaved as a signal peptide. Residue Ser-309 is the Nucleophile of the active site. Active-site charge relay system residues include Asp-391 and His-420.

It belongs to the carbohydrate esterase 7 family.

Its pathway is glycan degradation; xylan degradation. In terms of biological role, involved in degradation of plant cell wall polysaccharides. Has acetyl esterase activity towards a broad range of substrates including xylose-tetraacetate, 4-O-methylumbelliferyl acetate, glucose-pentaacetate, cephalosporin C, and acetylated xylo-oligosaccharides smaller than xylo-heptaose. Displays no detectable activity on polymeric acetylated xylan. This is Acetyl esterase Axe7A from Xylanibacter ruminicola (strain ATCC 19189 / DSM 19721 / CIP 105475 / JCM 8958 / 23) (Prevotella ruminicola).